The primary structure comprises 156 residues: Small ribosomal subunit protein uS7 (156 aa).

This sequence belongs to the universal ribosomal protein uS7 family. As to quaternary structure, part of the 30S ribosomal subunit. Contacts proteins S9 and S11.

In terms of biological role, one of the primary rRNA binding proteins, it binds directly to 16S rRNA where it nucleates assembly of the head domain of the 30S subunit. Is located at the subunit interface close to the decoding center, probably blocks exit of the E-site tRNA. The polypeptide is Small ribosomal subunit protein uS7 (Campylobacter hominis (strain ATCC BAA-381 / DSM 21671 / CCUG 45161 / LMG 19568 / NCTC 13146 / CH001A)).